A 1017-amino-acid polypeptide reads, in one-letter code: Voltage-gated delayed rectifier potassium channel KCNH4 (1017 aa).

Residues 1–232 (MPVMKGLLAP…YSIPKAVWDG (232 aa)) are Cytoplasmic-facing. Residues 14–90 (FLDTIATRFD…QRLQKALEGH (77 aa)) form the PAS domain. The PAC domain maps to 93–145 (HRAEICFYRKDGSAFWCLLDMMPIKNELGEVVLFLFSFKDISQSGGPGLGSPG). The interval 139–170 (PGLGSPGIHGDNNNHENSLGRRGASSRLRSTR) is disordered. The chain crosses the membrane as a helical span at residues 233-253 (LILLATFYVAVTVPYNVCFAG). The Extracellular segment spans residues 254-262 (DDDTPITSR). A helical membrane pass occupies residues 263-283 (HTLVSDIAVEMLFILDIILNF). Residues 284–305 (RTTYVSQSGQVVSAPRSIGLHY) lie on the Cytoplasmic side of the membrane. A helical transmembrane segment spans residues 306–326 (LATWFFVDLIAALPFDLLYVF). At 327–334 (NITVTSLV) the chain is on the extracellular side. The helical; Voltage-sensor transmembrane segment at 335 to 355 (HLLKTVRLLRLLRLLQKLERY) threads the bilayer. Residues 356–364 (SQCSAVVLT) lie on the Cytoplasmic side of the membrane. A helical membrane pass occupies residues 365–385 (LLMSVFALLAHWMACVWYVIG). Topologically, residues 386–427 (RREMEANDPLLWDIGWLHELGKRLEEPYVNGSAGGPSRRSAY) are extracellular. N415 carries an N-linked (GlcNAc...) asparagine glycan. The segment at residues 428 to 448 (IAALYFTLSSLTSVGFGNVCA) is an intramembrane region (pore-forming). A Selectivity filter motif is present at residues 440–445 (SVGFGN). At 449 to 454 (NTDAEK) the chain is on the extracellular side. Residues 455-475 (IFSICTMLIGALMHAVVFGNV) traverse the membrane as a helical segment. Residues 476 to 1017 (TAIIQRMYSR…SFQSGSDTFH (542 aa)) lie on the Cytoplasmic side of the membrane. The cNMP-binding domain stretch occupies residues 557-621 (LFGAASRGCL…AILGKGDLIG (65 aa)). Disordered stretches follow at residues 690-749 (GSEN…PNLS) and 771-870 (LVSS…ELAT). The segment covering 703-726 (PRLSQARSDTLGSSSDKTLPSITE) has biased composition (polar residues). Composition is skewed to low complexity over residues 771–786 (LVSS…PALA) and 806–820 (PPQL…FGPP). Residues 873–907 (AEEVKEKVCRLNQEISRLNQEVSQLSRELRQVMGL) are a coiled coil. The interval 972 to 1017 (SELRSSMVPPFPSEPDPLGPSPVPEASPLTPSLLKHSFQSGSDTFH) is disordered. The segment covering 980 to 996 (PPFPSEPDPLGPSPVPE) has biased composition (pro residues). Residues 1008–1017 (SFQSGSDTFH) show a composition bias toward polar residues.

The protein belongs to the potassium channel family. H (Eag) (TC 1.A.1.20) subfamily. Kv12.3/KCNH4 sub-subfamily. As to quaternary structure, the potassium channel is probably composed of a homo- or heterotetrameric complex of pore-forming alpha subunits that can associate with modulating beta subunits. As to expression, highly expressed in adult testis, and in adult and embryonic brain. In adult brain found in piriform cortex, olfactory tubercle, cerebral cortex, hippocampus pyramidial cells and dentate gyrus and basal ganglia of caudate/putamen and accumbens nucleus. Detected at intermediate levels in lung, spinal cord, and pituitary.

It localises to the membrane. The enzyme catalyses K(+)(in) = K(+)(out). In terms of biological role, pore-forming (alpha) subunit of a voltage-gated delayed rectifier. Activates at more negative voltages, exhibits fast prepulse-independent activation kinetics and deactivates much more slowly, but shows no inactivation. This Rattus norvegicus (Rat) protein is Voltage-gated delayed rectifier potassium channel KCNH4.